The chain runs to 305 residues: Oxygen-dependent coproporphyrinogen-III oxidase (305 aa).

Substrate is bound at residue S92. Residues H96 and H106 each coordinate a divalent metal cation. Residue H106 is the Proton donor of the active site. Residue N108–R110 participates in substrate binding. A divalent metal cation-binding residues include H145 and H175. The interval Y239–E274 is important for dimerization. Residue G257–R259 coordinates substrate.

Belongs to the aerobic coproporphyrinogen-III oxidase family. In terms of assembly, homodimer. A divalent metal cation is required as a cofactor.

The protein resides in the cytoplasm. The catalysed reaction is coproporphyrinogen III + O2 + 2 H(+) = protoporphyrinogen IX + 2 CO2 + 2 H2O. Its pathway is porphyrin-containing compound metabolism; protoporphyrin-IX biosynthesis; protoporphyrinogen-IX from coproporphyrinogen-III (O2 route): step 1/1. Functionally, involved in the heme biosynthesis. Catalyzes the aerobic oxidative decarboxylation of propionate groups of rings A and B of coproporphyrinogen-III to yield the vinyl groups in protoporphyrinogen-IX. The sequence is that of Oxygen-dependent coproporphyrinogen-III oxidase from Xylella fastidiosa (strain M12).